Here is a 241-residue protein sequence, read N- to C-terminus: Protein McbE (241 aa).

6 helical membrane passes run 17–35 (TPFS…FFFL), 54–72 (ISWF…NYCL), 105–123 (LIMS…LTGF), 131–149 (IVMI…MVSL), 163–181 (STIY…IVSL), and 212–230 (LMTI…ISAL).

The protein resides in the cell membrane. In terms of biological role, together with two further proteins McbF and McbG this protein causes immunity to the peptide antibiotic microcin B17 (MccB17), which inhibits DNA replication in enterobacteriaceae. Immunity is determined by two different mechanisms. McbE is involved in the production of extracellular MccB17 and, in a complex with McbF it also serves as 'pump' for the export of active MccB17 from the cytoplasm to the periplasmic space. This chain is Protein McbE (mcbE), found in Escherichia coli.